The primary structure comprises 686 residues: DNA ligase 2 (686 aa).

Residues 37-41, 86-87, and Glu-121 each bind NAD(+); these read DDEYD and SL. The active-site N6-AMP-lysine intermediate is the Lys-123. Arg-144, Glu-179, Lys-295, and Lys-319 together coordinate NAD(+). The Zn(2+) site is built by Cys-413, Cys-416, Cys-431, and Cys-436. Positions 593 to 681 constitute a BRCT domain; that stretch reads VRGEQLAGLN…GVQLPGVQAS (89 aa).

The protein belongs to the NAD-dependent DNA ligase family. LigA subfamily. Mg(2+) serves as cofactor. Mn(2+) is required as a cofactor.

It catalyses the reaction NAD(+) + (deoxyribonucleotide)n-3'-hydroxyl + 5'-phospho-(deoxyribonucleotide)m = (deoxyribonucleotide)n+m + AMP + beta-nicotinamide D-nucleotide.. Its function is as follows. DNA ligase that catalyzes the formation of phosphodiester linkages between 5'-phosphoryl and 3'-hydroxyl groups in double-stranded DNA using NAD as a coenzyme and as the energy source for the reaction. It is essential for DNA replication and repair of damaged DNA. This is DNA ligase 2 from Deinococcus deserti (strain DSM 17065 / CIP 109153 / LMG 22923 / VCD115).